A 327-amino-acid chain; its full sequence is Annexin A8 (327 aa).

4 Annexin repeats span residues 21–92, 93–164, 177–249, and 253–324; these read FNPD…ALMY, PPYR…CLLQ, GLAL…TVVK, and NLHG…NLVG. 4 residues coordinate Ca(2+): Met-266, Gly-268, Gly-270, and Asp-310.

The protein belongs to the annexin family.

This protein is an anticoagulant protein that acts as an indirect inhibitor of the thromboplastin-specific complex, which is involved in the blood coagulation cascade. In Bos taurus (Bovine), this protein is Annexin A8 (ANXA8).